We begin with the raw amino-acid sequence, 291 residues long: Insulin-like growth factor-binding protein 3 (291 aa).

An N-terminal signal peptide occupies residues methionine 1–alanine 27. Residues glycine 28 to proline 134 form an IGF-binding region. The 82-residue stretch at proline 36 to alanine 117 folds into the IGFBP N-terminal domain. Disulfide bonds link cysteine 40–cysteine 67, cysteine 43–cysteine 69, cysteine 51–cysteine 70, cysteine 58–cysteine 73, cysteine 81–cysteine 94, and cysteine 88–cysteine 114. N-linked (GlcNAc...) (complex) asparagine glycosylation is found at asparagine 116 and asparagine 136. 2 disordered regions span residues alanine 130 to aspartate 162 and aspartate 189 to glycine 211. Over residues alanine 146–serine 156 the composition is skewed to low complexity. A Phosphoserine; by FAM20C modification is found at serine 148. Polar residues predominate over residues glutamate 191 to serine 202. The residue at position 194 (serine 194) is a Phosphoserine; by CK2. Asparagine 199 is a glycosylation site (N-linked (GlcNAc...) (complex) asparagine). Serine 201 is subject to Phosphoserine; by FAM20C. The residue at position 202 (serine 202) is a Phosphoserine; by CK2. Positions tyrosine 210–cysteine 285 constitute a Thyroglobulin type-1 domain. Intrachain disulfides connect cysteine 213–cysteine 240, cysteine 251–cysteine 262, and cysteine 264–cysteine 285.

As to quaternary structure, interacts with XLKD1. Binds IGF2 more than IGF1. Forms a ternary complex of about 140 to 150 kDa with IGF1 or IGF2 and a 85 kDa glycoprotein (ALS). Interacts with humanin; humanin competes with importin KPNB1 for binding to IGFBP3, blocking IGFBP3 nuclear import and IGFBP3-mediated apoptosis. Interacts with TMEM219. Interacts with RXRA; this interaction modulates the transcriptional activity of RXRA. Interacts with LRP1; this interaction mediates cell growth inhibition independent of IGF1. Phosphorylated by FAM20C in the extracellular medium. Phosphorylated by CK2; resulting in decreased nuclear localization. In terms of tissue distribution, expressed by most tissues. Present in plasma.

The protein resides in the secreted. It localises to the nucleus. Functionally, multifunctional protein that plays a critical role in regulating the availability of IGFs such as IGF1 and IGF2 to their receptors and thereby regulates IGF-mediated cellular processes including proliferation, differentiation, and apoptosis in a cell-type specific manner. Also exhibits IGF-independent antiproliferative and apoptotic effects mediated by its receptor TMEM219/IGFBP-3R. Inhibits the positive effect of humanin on insulin sensitivity. Promotes testicular germ cell apoptosis. Acts via LRP-1/alpha2M receptor, also known as TGF-beta type V receptor, to mediate cell growth inhibition independent of IGF1. Mechanistically, induces serine-specific dephosphorylation of IRS1 or IRS2 upon ligation to its receptor, leading to the inhibitory cascade. In the nucleus, interacts with transcription factors such as retinoid X receptor-alpha/RXRA to regulate transcriptional signaling and apoptosis. The protein is Insulin-like growth factor-binding protein 3 (IGFBP3) of Homo sapiens (Human).